We begin with the raw amino-acid sequence, 363 residues long: Uptake hydrogenase small subunit (363 aa).

The segment at residues Met1 to Ala43 is a signal peptide (tat-type signal). Cys60, Cys63, Cys158, Cys192, His230, Cys233, Cys258, and Cys264 together coordinate [4Fe-4S] cluster. [3Fe-4S] cluster is bound by residues Cys273, Cys292, and Cys295.

It belongs to the [NiFe]/[NiFeSe] hydrogenase small subunit family. In terms of assembly, heterodimer of a large and a small subunit. Requires [4Fe-4S] cluster as cofactor. [3Fe-4S] cluster serves as cofactor. Post-translationally, predicted to be exported by the Tat system. The position of the signal peptide cleavage has not been experimentally proven.

The protein resides in the cell membrane. The catalysed reaction is H2 + A = AH2. Functionally, this enzyme recycles the H(2) produced by nitrogenase to increase the production of ATP and to protect nitrogenase against inhibition or damage by O(2) under carbon- or phosphate-limited conditions. This is Uptake hydrogenase small subunit (hupS) from Alcaligenes hydrogenophilus.